We begin with the raw amino-acid sequence, 306 residues long: UDP-N-acetylenolpyruvoylglucosamine reductase (306 aa).

The 167-residue stretch at 28–194 (KIGNISKLFL…LKTELNLKKE (167 aa)) folds into the FAD-binding PCMH-type domain. Residue serine 223 is the Proton donor of the active site. The active site involves glutamate 295.

Belongs to the MurB family. FAD is required as a cofactor.

It is found in the cytoplasm. The catalysed reaction is UDP-N-acetyl-alpha-D-muramate + NADP(+) = UDP-N-acetyl-3-O-(1-carboxyvinyl)-alpha-D-glucosamine + NADPH + H(+). Its pathway is cell wall biogenesis; peptidoglycan biosynthesis. Cell wall formation. This chain is UDP-N-acetylenolpyruvoylglucosamine reductase, found in Borrelia garinii subsp. bavariensis (strain ATCC BAA-2496 / DSM 23469 / PBi) (Borreliella bavariensis).